The primary structure comprises 179 residues: Translation initiation factor IF-3 (179 aa).

The protein belongs to the IF-3 family. As to quaternary structure, monomer.

It is found in the cytoplasm. Functionally, IF-3 binds to the 30S ribosomal subunit and shifts the equilibrium between 70S ribosomes and their 50S and 30S subunits in favor of the free subunits, thus enhancing the availability of 30S subunits on which protein synthesis initiation begins. The chain is Translation initiation factor IF-3 from Lactococcus lactis subsp. lactis (strain IL1403) (Streptococcus lactis).